Consider the following 96-residue polypeptide: Large ribosomal subunit protein bL21 (96 aa).

This sequence belongs to the bacterial ribosomal protein bL21 family. In terms of assembly, part of the 50S ribosomal subunit. Contacts protein L20.

In terms of biological role, this protein binds to 23S rRNA in the presence of protein L20. The protein is Large ribosomal subunit protein bL21 of Prosthecochloris aestuarii (strain DSM 271 / SK 413).